The chain runs to 272 residues: Cell division protein ZipA (272 aa).

The Periplasmic segment spans residues 1–4; that stretch reads METH. Residues 5-25 traverse the membrane as a helical segment; the sequence is ILFFILAGLLIAVLIGYSIWS. Over 26–272 the chain is Cytoplasmic; sequence ARREKSRIFS…RQNYLLRVAN (247 aa).

Belongs to the ZipA family. As to quaternary structure, interacts with FtsZ via their C-terminal domains.

The protein resides in the cell inner membrane. In terms of biological role, essential cell division protein that stabilizes the FtsZ protofilaments by cross-linking them and that serves as a cytoplasmic membrane anchor for the Z ring. Also required for the recruitment to the septal ring of downstream cell division proteins. The protein is Cell division protein ZipA of Glaesserella parasuis serovar 5 (strain SH0165) (Haemophilus parasuis).